We begin with the raw amino-acid sequence, 191 residues long: dCTP deaminase (191 aa).

Residues K112–R117, T136–E138, Q157, Y173, and Q183 each bind dCTP. E138 (proton donor/acceptor) is an active-site residue.

This sequence belongs to the dCTP deaminase family. In terms of assembly, homotrimer.

It catalyses the reaction dCTP + H2O + H(+) = dUTP + NH4(+). The protein operates within pyrimidine metabolism; dUMP biosynthesis; dUMP from dCTP (dUTP route): step 1/2. Catalyzes the deamination of dCTP to dUTP. This is dCTP deaminase from Psychrobacter cryohalolentis (strain ATCC BAA-1226 / DSM 17306 / VKM B-2378 / K5).